Consider the following 55-residue polypeptide: Locustin (55 aa).

Disulfide bonds link C5–C40, C7–C36, C10–C32, and C17–C54.

In terms of assembly, monomer. As to expression, stored in hemocyte granules and secreted into the hemolymph.

The protein resides in the secreted. Functionally, has antibacterial activity against Gram-positive bacterium M.luteus. This chain is Locustin, found in Locusta migratoria (Migratory locust).